A 768-amino-acid polypeptide reads, in one-letter code: Protein transport protein Sec23A (768 aa).

Residue T2 is modified to N-acetylthreonine. Zn(2+) is bound by residues C61, C66, C85, and C88. Phosphothreonine is present on T308. A Gelsolin-like repeat occupies 632–718 (PEPVLLDSSS…EHGGSQARFL (87 aa)).

The protein belongs to the SEC23/SEC24 family. SEC23 subfamily. COPII is composed of at least five proteins: the Sec23/24 complex, the Sec13/31 complex and Sar1. Interacts with SEC23IP. Interacts with HTR4. Interacts with SEC16A. Interacts with SLC6A4. Interacts (as part of the Sec23/24 complex) with SEC22B; recruits SEC22B into COPII-coated vesicles and allows the transport of this cargo from the endoplasmic reticulum to the Golgi. Interacts (via Gelsolin-like repeat) with MIA2 and MIA3; specifically involved in the transport of large cargos like the collagen COL7A1. Interacts with DDHD1. Interacts with TMEM39A. Interacts with SACM1L; this interaction is reduced in the absence of TMEM39A. Interacts with kinase FAM20C; transport of FAM20C from the endoplasmic reticulum to the Golgi is likely to be mediated by COPII vesicles.

The protein localises to the cytoplasmic vesicle. It localises to the COPII-coated vesicle membrane. The protein resides in the endoplasmic reticulum membrane. Its subcellular location is the cytoplasm. It is found in the cytosol. Functionally, component of the coat protein complex II (COPII) which promotes the formation of transport vesicles from the endoplasmic reticulum (ER). The coat has two main functions, the physical deformation of the endoplasmic reticulum membrane into vesicles and the selection of cargo molecules for their transport to the Golgi complex. Required for the translocation of insulin-induced glucose transporter SLC2A4/GLUT4 to the cell membrane. This chain is Protein transport protein Sec23A, found in Bos taurus (Bovine).